A 492-amino-acid polypeptide reads, in one-letter code: Glycylpeptide N-tetradecanoyltransferase (492 aa).

Residues 1-22 (MSDSKDRKGKAPEGQSSEKKDG) show a composition bias toward basic and acidic residues. The interval 1–45 (MSDSKDRKGKAPEGQSSEKKDGAVNITPQMAESLLENNPALRNET) is disordered. Tetradecanoyl-CoA is bound by residues 82 to 85 (YKFW), 215 to 217 (LCI), and 223 to 227 (SKRLT). Leu492 functions as the Proton acceptor; via carboxylate in the catalytic mechanism.

It belongs to the NMT family. In terms of assembly, monomer.

The protein localises to the cytoplasm. The catalysed reaction is N-terminal glycyl-[protein] + tetradecanoyl-CoA = N-tetradecanoylglycyl-[protein] + CoA + H(+). Its function is as follows. Adds a myristoyl group to the N-terminal glycine residue of certain cellular proteins. This is Glycylpeptide N-tetradecanoyltransferase (nmt1) from Aspergillus fumigatus (strain ATCC MYA-4609 / CBS 101355 / FGSC A1100 / Af293) (Neosartorya fumigata).